The chain runs to 422 residues: Glutamate-1-semialdehyde 2,1-aminomutase (422 aa).

Position 264 is an N6-(pyridoxal phosphate)lysine (lysine 264).

This sequence belongs to the class-III pyridoxal-phosphate-dependent aminotransferase family. HemL subfamily. In terms of assembly, homodimer. Requires pyridoxal 5'-phosphate as cofactor.

The protein resides in the cytoplasm. It carries out the reaction (S)-4-amino-5-oxopentanoate = 5-aminolevulinate. The protein operates within porphyrin-containing compound metabolism; protoporphyrin-IX biosynthesis; 5-aminolevulinate from L-glutamyl-tRNA(Glu): step 2/2. This Clostridium tetani (strain Massachusetts / E88) protein is Glutamate-1-semialdehyde 2,1-aminomutase.